The chain runs to 116 residues: UPF0342 protein CTC_01059 (116 aa).

This sequence belongs to the UPF0342 family.

This is UPF0342 protein CTC_01059 from Clostridium tetani (strain Massachusetts / E88).